The primary structure comprises 431 residues: Dihydroorotase (431 aa).

Residues histidine 59 and histidine 61 each contribute to the Zn(2+) site. Substrate contacts are provided by residues 61–63 and asparagine 93; that span reads HLR. Zn(2+)-binding residues include aspartate 151, histidine 178, histidine 231, and aspartate 304. Aspartate 304 is a catalytic residue. Substrate contacts are provided by residues histidine 308 and 322–323; that span reads FG.

The protein belongs to the metallo-dependent hydrolases superfamily. DHOase family. Class I DHOase subfamily. Zn(2+) is required as a cofactor.

It carries out the reaction (S)-dihydroorotate + H2O = N-carbamoyl-L-aspartate + H(+). It participates in pyrimidine metabolism; UMP biosynthesis via de novo pathway; (S)-dihydroorotate from bicarbonate: step 3/3. Catalyzes the reversible cyclization of carbamoyl aspartate to dihydroorotate. The sequence is that of Dihydroorotase from Caldanaerobacter subterraneus subsp. tengcongensis (strain DSM 15242 / JCM 11007 / NBRC 100824 / MB4) (Thermoanaerobacter tengcongensis).